The following is a 217-amino-acid chain: Ubiquitin-conjugating enzyme E2 1 (217 aa).

Residues N4–A151 enclose the UBC core domain. C89 serves as the catalytic Glycyl thioester intermediate.

This sequence belongs to the ubiquitin-conjugating enzyme family.

The protein localises to the cytoplasm. It localises to the nucleus. It carries out the reaction S-ubiquitinyl-[E1 ubiquitin-activating enzyme]-L-cysteine + [E2 ubiquitin-conjugating enzyme]-L-cysteine = [E1 ubiquitin-activating enzyme]-L-cysteine + S-ubiquitinyl-[E2 ubiquitin-conjugating enzyme]-L-cysteine.. Its pathway is protein modification; protein ubiquitination. Functionally, catalyzes the covalent attachment of ubiquitin to other proteins. Functions in degradation of misfolded or regulated proteins localized in the endoplasmic reticulum (ER) lumen or membrane via the ubiquitin-proteasome system. Cognate E2 conjugating enzyme for the HRD1 ubiquitin ligase complex, which is part of the ERAD-L and ERAD-M pathways responsible for the rapid degradation of soluble lumenal and membrane proteins with misfolded lumenal domains (ERAD-L), or ER-membrane proteins with misfolded transmembrane domains (ERAD-M). The sequence is that of Ubiquitin-conjugating enzyme E2 1 (ubc1) from Schizosaccharomyces pombe (strain 972 / ATCC 24843) (Fission yeast).